The following is a 1102-amino-acid chain: Phosphatidylinositol 4,5-bisphosphate 3-kinase catalytic subunit gamma isoform (1102 aa).

One can recognise a PI3K-ABD domain in the interval 34 to 141; sequence SMELIPIEFV…PGQIHLVQRH (108 aa). The 93-residue stretch at 217-309 folds into the PI3K-RBD domain; sequence NNCIFIVIHR…GEEIHVVLDT (93 aa). One can recognise a C2 PI3K-type domain in the interval 357–521; the sequence is CDRKFRVKIR…NSMSISILLD (165 aa). Residues 541–723 enclose the PIK helical domain; that stretch reads DRVRAEMPNQ…AVILEAYLRG (183 aa). The region spanning 797-1080 is the PI3K/PI4K catalytic domain; the sequence is AIEKCKVMAS…QIEVCRDKGW (284 aa). Residues 803 to 809 form a G-loop region; that stretch reads VMASKKK. ATP contacts are provided by residues 829-838 and 864-872; these read GIIFKHGDDL and LLPYGCIST. A catalytic loop region spans residues 943–951; that stretch reads GIGDRHNDN. 961–969 serves as a coordination point for ATP; sequence FHIDFGHIL. The interval 962-988 is activation loop; that stretch reads HIDFGHILGNYKSFLGINKERVPFVLT. Thr-1024 carries the post-translational modification Phosphothreonine; by PKA. Ser-1101 carries the phosphoserine; by autocatalysis modification.

Belongs to the PI3/PI4-kinase family. Heterodimer of a catalytic subunit PIK3CG and a PIK3R5 or PIK3R6 regulatory subunit. Interacts with GRK2 through the PIK helical domain. Interaction with GRK2 is required for targeting to agonist-occupied receptor. Interacts with PDE3B; regulates PDE3B activity and thereby cAMP levels in cells. Interacts with TPM2. Interacts with EPHA8; regulates integrin-mediated cell adhesion to substrate. Interacts with HRAS; the interaction is required for membrane recruitment and beta-gamma G protein dimer-dependent activation of the PI3K gamma complex PIK3CG:PIK3R6. Post-translationally, autophosphorylation at Ser-1101 has no effect on the phosphatidylinositol-4,5-bisphosphate 3-kinase activity. In terms of tissue distribution, pancreas, skeletal muscle, liver and heart.

The protein resides in the cytoplasm. It is found in the cell membrane. It carries out the reaction a 1,2-diacyl-sn-glycero-3-phospho-(1D-myo-inositol) + ATP = a 1,2-diacyl-sn-glycero-3-phospho-(1D-myo-inositol-3-phosphate) + ADP + H(+). The catalysed reaction is a 1,2-diacyl-sn-glycero-3-phospho-(1D-myo-inositol-4,5-bisphosphate) + ATP = a 1,2-diacyl-sn-glycero-3-phospho-(1D-myo-inositol-3,4,5-trisphosphate) + ADP + H(+). It catalyses the reaction a 1,2-diacyl-sn-glycero-3-phospho-(1D-myo-inositol 4-phosphate) + ATP = a 1,2-diacyl-sn-glycero-3-phospho-(1D-myo-inositol-3,4-bisphosphate) + ADP + H(+). The enzyme catalyses L-seryl-[protein] + ATP = O-phospho-L-seryl-[protein] + ADP + H(+). It functions in the pathway phospholipid metabolism; phosphatidylinositol phosphate biosynthesis. Its activity is regulated as follows. Activated by both the alpha and the beta-gamma G proteins following stimulation of G protein-coupled receptors (GPCRs). Activation by GPCRs is assisted by the regulatory subunits (PIK3R5 or PIK3R6) leading to the translocation from the cytosol to the plasma membrane and to kinase activation. Inhibited by AS-604850 and AS-605240. In terms of biological role, phosphoinositide-3-kinase (PI3K) that phosphorylates PtdIns(4,5)P2 (Phosphatidylinositol 4,5-bisphosphate) to generate phosphatidylinositol 3,4,5-trisphosphate (PIP3). PIP3 plays a key role by recruiting PH domain-containing proteins to the membrane, including AKT1 and PDPK1, activating signaling cascades involved in cell growth, survival, proliferation, motility and morphology. Links G-protein coupled receptor activation to PIP3 production. Involved in immune, inflammatory and allergic responses. Modulates leukocyte chemotaxis to inflammatory sites and in response to chemoattractant agents. May control leukocyte polarization and migration by regulating the spatial accumulation of PIP3 and by regulating the organization of F-actin formation and integrin-based adhesion at the leading edge. Controls motility of dendritic cells. Together with PIK3CD is involved in natural killer (NK) cell development and migration towards the sites of inflammation. Participates in T-lymphocyte migration. Regulates T-lymphocyte proliferation, activation, and cytokine production. Together with PIK3CD participates in T-lymphocyte development. Required for B-lymphocyte development and signaling. Together with PIK3CD participates in neutrophil respiratory burst. Together with PIK3CD is involved in neutrophil chemotaxis and extravasation. Together with PIK3CB promotes platelet aggregation and thrombosis. Regulates alpha-IIb/beta-3 integrins (ITGA2B/ ITGB3) adhesive function in platelets downstream of P2Y12 through a lipid kinase activity-independent mechanism. May have also a lipid kinase activity-dependent function in platelet aggregation. Involved in endothelial progenitor cell migration. Negative regulator of cardiac contractility. Modulates cardiac contractility by anchoring protein kinase A (PKA) and PDE3B activation, reducing cAMP levels. Regulates cardiac contractility also by promoting beta-adrenergic receptor internalization by binding to GRK2 and by non-muscle tropomyosin phosphorylation. Also has serine/threonine protein kinase activity: both lipid and protein kinase activities are required for beta-adrenergic receptor endocytosis. May also have a scaffolding role in modulating cardiac contractility. Contributes to cardiac hypertrophy under pathological stress. Through simultaneous binding of PDE3B to RAPGEF3 and PIK3R6 is assembled in a signaling complex in which the PI3K gamma complex is activated by RAPGEF3 and which is involved in angiogenesis. In neutrophils, participates in a phospholipase C-activating N-formyl peptide-activated GPCR (G protein-coupled receptor) signaling pathway downstream of RASGRP4-mediated Ras-activation, to promote neutrophil functional responses. The chain is Phosphatidylinositol 4,5-bisphosphate 3-kinase catalytic subunit gamma isoform (PIK3CG) from Homo sapiens (Human).